A 419-amino-acid chain; its full sequence is UDP-N-acetylglucosamine 1-carboxyvinyltransferase (419 aa).

A phosphoenolpyruvate-binding site is contributed by 22 to 23; that stretch reads KN. Arg-93 provides a ligand contact to UDP-N-acetyl-alpha-D-glucosamine. Cys-117 acts as the Proton donor in catalysis. Cys-117 carries the post-translational modification 2-(S-cysteinyl)pyruvic acid O-phosphothioketal. 2 residues coordinate UDP-N-acetyl-alpha-D-glucosamine: Asp-307 and Ile-329.

The protein belongs to the EPSP synthase family. MurA subfamily.

The protein localises to the cytoplasm. The enzyme catalyses phosphoenolpyruvate + UDP-N-acetyl-alpha-D-glucosamine = UDP-N-acetyl-3-O-(1-carboxyvinyl)-alpha-D-glucosamine + phosphate. It participates in cell wall biogenesis; peptidoglycan biosynthesis. Its function is as follows. Cell wall formation. Adds enolpyruvyl to UDP-N-acetylglucosamine. The polypeptide is UDP-N-acetylglucosamine 1-carboxyvinyltransferase (Shewanella piezotolerans (strain WP3 / JCM 13877)).